The primary structure comprises 698 residues: Elongation factor G (698 aa).

In terms of domain architecture, tr-type G spans Ala-10–Leu-285. GTP-binding positions include Ala-19–Thr-26, Asp-83–His-87, and Asn-137–Asp-140.

Belongs to the TRAFAC class translation factor GTPase superfamily. Classic translation factor GTPase family. EF-G/EF-2 subfamily.

The protein localises to the cytoplasm. Its function is as follows. Catalyzes the GTP-dependent ribosomal translocation step during translation elongation. During this step, the ribosome changes from the pre-translocational (PRE) to the post-translocational (POST) state as the newly formed A-site-bound peptidyl-tRNA and P-site-bound deacylated tRNA move to the P and E sites, respectively. Catalyzes the coordinated movement of the two tRNA molecules, the mRNA and conformational changes in the ribosome. The polypeptide is Elongation factor G (Frankia alni (strain DSM 45986 / CECT 9034 / ACN14a)).